An 813-amino-acid polypeptide reads, in one-letter code: Probable receptor-like protein kinase At5g39020 (813 aa).

The signal sequence occupies residues 1-21 (MNCNVLFLLSVLVSVTAGVTA). Residues 22–437 (AYHPTDVFLF…TPPIKGKPHV (416 aa)) lie on the Extracellular side of the membrane. N-linked (GlcNAc...) asparagine glycans are attached at residues Asn-46, Asn-61, Asn-165, Asn-202, Asn-213, Asn-263, Asn-286, Asn-293, Asn-384, and Asn-401. Residues 438-458 (LVIILIVVGSVIGLATFIVII) traverse the membrane as a helical segment. The Cytoplasmic segment spans residues 459-813 (MLLIRQMKRK…QTQTLDSTII (355 aa)). Residues 496–771 (KSFSHTVGKG…KVVEMIEGSL (276 aa)) enclose the Protein kinase domain. ATP contacts are provided by residues 502–510 (VGKGGFGTV) and Lys-524. The active-site Proton acceptor is Asp-619. The interval 791–813 (ESSSLSDGQEAEKQTQTLDSTII) is disordered. Residues 804-813 (QTQTLDSTII) are compositionally biased toward polar residues.

Belongs to the protein kinase superfamily. Ser/Thr protein kinase family.

The protein localises to the membrane. The chain is Probable receptor-like protein kinase At5g39020 from Arabidopsis thaliana (Mouse-ear cress).